We begin with the raw amino-acid sequence, 170 residues long: ATP synthase subunit b (170 aa).

The chain crosses the membrane as a helical span at residues 15–37; sequence FNLFETNILNWAVVIFGLYKFLP. A disordered region spans residues 72–98; sequence AKKDLSSAEEKASQIKADSLKRSESIR.

The protein belongs to the ATPase B chain family. As to quaternary structure, F-type ATPases have 2 components, F(1) - the catalytic core - and F(0) - the membrane proton channel. F(1) has five subunits: alpha(3), beta(3), gamma(1), delta(1), epsilon(1). F(0) has four main subunits: a(1), b(1), b'(1) and c(10-14). The alpha and beta chains form an alternating ring which encloses part of the gamma chain. F(1) is attached to F(0) by a central stalk formed by the gamma and epsilon chains, while a peripheral stalk is formed by the delta, b and b' chains.

It localises to the cellular thylakoid membrane. In terms of biological role, f(1)F(0) ATP synthase produces ATP from ADP in the presence of a proton or sodium gradient. F-type ATPases consist of two structural domains, F(1) containing the extramembraneous catalytic core and F(0) containing the membrane proton channel, linked together by a central stalk and a peripheral stalk. During catalysis, ATP synthesis in the catalytic domain of F(1) is coupled via a rotary mechanism of the central stalk subunits to proton translocation. Functionally, component of the F(0) channel, it forms part of the peripheral stalk, linking F(1) to F(0). The protein is ATP synthase subunit b of Prochlorococcus marinus (strain MIT 9215).